The chain runs to 800 residues: MSLVYLLIAILVIMAMILLTSKRRAMAKYAGYIALTAPVIASIYFLLQVPSVIKQHYLSVSIPWMTSLDINVDLRLDGLSLMFSLIISLIGIAVFFYATQYLSSRKDNLPRFYLYLTLFMFSMLGIVLADNTILMYVFWELTSVSSFLLISYWYNNGDSQFGAMQSFMITVFGGLALLVGFIMLYIMTGTNNITEILGQADHIKNHALFIPMIIMFLLGAFTKSAQFPFHIWLPRAMAAPTPVSAYLHSATMVKAGIFLLLRFTPLLGLSNMYIYIVTFVGLITMLFGSITALKQWDLKGILAYSTISQLGMIMAMVGIGGGYAQHQQDAIASIYVFVLFAALFHLMNHAIFKCALFMGVGILDHEAGSRDIRILSGMRQLFPKMNLVMMIAALSMAGVPFLNGFLSKEMFLDALTQTGQLSQFSLISMIIIVCMGVIASIFTFTYALYMVKEVFWTKYDSKVFTKKNIHEPWLFSLPSLILMVLVPVIFFVPNIFGKGIIVPALRGVSGGNHQIDPLVPHVSQWHGFNIPLLLTIIIILLGSVLAIKVDWKKVFTGKIRQISVSKGYEMVYRQFEKFTTKRFKRVMQDRLNQYIIMTLGIFMVIIGYGYIRIGLPKVHQLHVSEFGPLEVILAIVTVIIGLSLIFIRQRLTMVILNGVIGFVVTLFFIAMKAPDLALTQLVVETITTILFIVSFSRLPNVPRSKVNKKREIIKISVSLMMALIVVSLIFIAQQADGLASISNFYLRADKLTGGKNIVNAILGDFRALDTLFEGLVLIITGLGIYTLLNYQDRRGQDERE.

20 helical membrane-spanning segments follow: residues 1 to 21, 33 to 53, 78 to 98, 118 to 138, 167 to 187, 207 to 227, 241 to 261, 273 to 293, 300 to 320, 331 to 351, 387 to 407, 424 to 444, 472 to 492, 527 to 547, 595 to 615, 627 to 647, 651 to 671, 676 to 696, 712 to 732, and 768 to 788; these read MSLVYLLIAILVIMAMILLTS, IALTAPVIASIYFLLQVPSVI, GLSLMFSLIISLIGIAVFFYA, LFMFSMLGIVLADNTILMYVF, FMITVFGGLALLVGFIMLYIM, ALFIPMIIMFLLGAFTKSAQF, TPVSAYLHSATMVKAGIFLLL, YIYIVTFVGLITMLFGSITAL, GILAYSTISQLGMIMAMVGIG, IASIYVFVLFAALFHLMNHAI, LVMMIAALSMAGVPFLNGFLS, FSLISMIIIVCMGVIASIFTF, PWLFSLPSLILMVLVPVIFFV, GFNIPLLLTIIIILLGSVLAI, IIMTLGIFMVIIGYGYIRIGL, GPLEVILAIVTVIIGLSLIFI, LTMVILNGVIGFVVTLFFIAM, LALTQLVVETITTILFIVSFS, IIKISVSLMMALIVVSLIFIA, and LDTLFEGLVLIITGLGIYTLL.

This sequence belongs to the CPA3 antiporters (TC 2.A.63) subunit A family. May form a heterooligomeric complex that consists of seven subunits: mnhA2, mnhB2, mnhC2, mnhD2, mnhE2, mnhF2 and mnhG2.

The protein resides in the cell membrane. The protein is Putative antiporter subunit mnhA2 (mnhA2) of Staphylococcus aureus (strain MRSA252).